The following is a 441-amino-acid chain: MNDLRNIPQVDKIIKNEAFSGLDTSLVTMLARQILDEVRAKILNENASFESEEIINLILDEYYKFNEASLQRVLNLTGVTIHTNLARSVIDKEILKRATPVITGYSNLEYNLKTGSRGNRYDYVGSLIARAFGFEDAIVVNNNASAVFLVLNTFAKGREVVVSRGELVEIGGSFRVPEVMANAGCILKEVGTTNKTRLNDYEEAISDETAMLVKVHRSNFDIVGFSEETTANELSELASRQNLIDYFDLGSGFYGNLPFNLDKNEPDLKNLKDVSLVSFSGDKLLGAVQCGIIVGKKELIAKLRKNQLLRMLRVDKVIISLLAESIKAYLNKEFELITTQKLLHKSVKELENLANFINKSLKTPLEIVRTQTFVGGGAMPNKKIPSVALAFGGDANLNELKFRQKKVIGRIENDKFMLDLRSLLDDDVETLIKIINETEEK.

Lys283 carries the post-translational modification N6-(pyridoxal phosphate)lysine.

The protein belongs to the SelA family. The cofactor is pyridoxal 5'-phosphate.

It is found in the cytoplasm. The catalysed reaction is L-seryl-tRNA(Sec) + selenophosphate + H(+) = L-selenocysteinyl-tRNA(Sec) + phosphate. It functions in the pathway aminoacyl-tRNA biosynthesis; selenocysteinyl-tRNA(Sec) biosynthesis; selenocysteinyl-tRNA(Sec) from L-seryl-tRNA(Sec) (bacterial route): step 1/1. In terms of biological role, converts seryl-tRNA(Sec) to selenocysteinyl-tRNA(Sec) required for selenoprotein biosynthesis. The protein is L-seryl-tRNA(Sec) selenium transferase of Campylobacter concisus (strain 13826).